A 406-amino-acid polypeptide reads, in one-letter code: Tryptophan synthase beta chain (406 aa).

K99 bears the N6-(pyridoxal phosphate)lysine mark.

Belongs to the TrpB family. In terms of assembly, tetramer of two alpha and two beta chains. Requires pyridoxal 5'-phosphate as cofactor.

The catalysed reaction is (1S,2R)-1-C-(indol-3-yl)glycerol 3-phosphate + L-serine = D-glyceraldehyde 3-phosphate + L-tryptophan + H2O. The protein operates within amino-acid biosynthesis; L-tryptophan biosynthesis; L-tryptophan from chorismate: step 5/5. In terms of biological role, the beta subunit is responsible for the synthesis of L-tryptophan from indole and L-serine. In Rhizobium leguminosarum bv. trifolii (strain WSM2304), this protein is Tryptophan synthase beta chain.